A 248-amino-acid chain; its full sequence is Neurovirulence factor ICP34.5 (248 aa).

Residues 1–14 are compositionally biased toward basic residues; that stretch reads MARRRRHRGPRRPR. The segment at 1–16 is required for nucleolar localization; it reads MARRRRHRGPRRPRPP. Disordered stretches follow at residues 1 to 129 and 149 to 174; these read MARR…FRLP and RRAGGEGAPEPPATPATPATPATPAT. Positions 24-35 are enriched in polar residues; that stretch reads TAQSQVTSTPNS. Over residues 45-58 the composition is skewed to pro residues; sequence AAPPPPPAGGPPPS. Residues 73–83 show a composition bias toward acidic residues; sequence ASDDDDDDDWP. 2 stretches are compositionally biased toward pro residues: residues 84–93 and 119–128; these read DSPPPEPAPE and SHPPSRPFRL. Residues 128 to 137 carry the Nuclear export signal motif; sequence LPPRLALRLR. A run of 5 repeats spans residues 161–163, 164–166, 167–169, 170–172, and 173–175. The 5 X 3 AA tandem repeats of A-T-P stretch occupies residues 161–175; that stretch reads ATPATPATPATPATP. Low complexity predominate over residues 164-174; the sequence is ATPATPATPAT. The tract at residues 175–188 is binding to PP1CA; the sequence is PARVRFSPHVRVRH. Positions 175–188 are interaction with host PPP1CA; sequence PARVRFSPHVRVRH. The tract at residues 190 to 248 is important for interferon resistance; sequence VVWASAARLARRGSWARERADRARFRRRVAEAEAVIGPCLGPEARARALARGAGPANSV. A Bipartite nuclear localization signal motif is present at residues 200 to 218; it reads RRGSWARERADRARFRRRV. The interval 218–233 is interaction with host EIF2S1/EIF-2ALPHA; the sequence is VAEAEAVIGPCLGPEA.

It belongs to the PPP1R15 family. In terms of assembly, interacts with host PPP1CA; this interaction forms a high-molecular-weight complex that dephosphorylates EIF2S1/eIF-2alpha. Interacts with host EIF2S1/eIF-2alpha; this interaction is crucial for the specific dephosphorylation of EIF2S1/eIF-2alpha by PPP1CA. Binds to proliferating cell nuclear antigen (PCNA), which may release host cells from growth arrest and facilitate viral replication. Interacts (via N-terminus) with host C1QBP; this interaction allows C1QBP to be recruited to the inner nuclear membrane by ICP34.5. Interacts with host PRKCA. Interacts with protein UL31. Interacts with host STING/TMEM173; this interaction inhibits the intracellular DNA sensing pathway. Interacts with host BECN1; this interaction modulates host autophagy.

The protein resides in the host cytoplasm. It localises to the host nucleus. Its subcellular location is the host nucleolus. It is found in the virion. In terms of biological role, inhibits the establishment of the immune response and of the integrated stress response (ISR) in the infected cell. Plays essential roles in viral nuclear egress to mediate capsid transit across the nuclear membrane. Facilitates nuclear egress cooperatively with host C1QBP and protein kinase C/PKC to induce lamin A/C phosphorylation and subsequent reorganization. In turn, lamina disassembles and nuclear egress occurs. Recruits the serine/threonine protein phosphatase PPP1CA/PP1-alpha to dephosphorylate the translation initiation factor EIF2S1/eIF-2alpha, thereby couteracting the host shutoff of protein synthesis involving double-stranded RNA-dependent protein kinase EIF2AK2/PKR. In turn, controls host IRF3 activation and subsequently inhibits host interferon response. Controls the DNA sensing pathway by interacting with and inhibiting host STING/TMEM173. Also down-modulates the host MHC class II proteins cell surface expression. Acts as a neurovirulence factor that has a profound effect on the growth of the virus in central nervous system tissue, by interacting with host BECN1 and thereby antagonizing the host autophagy response. In Homo sapiens (Human), this protein is Neurovirulence factor ICP34.5 (ICP34.5).